The primary structure comprises 267 residues: Ras-related protein Rab-36 (267 aa).

Positions 68, 69, 70, 71, 72, 83, 86, and 89 each coordinate GTP. Thr71 contributes to the Mg(2+) binding site. The Switch 1 motif lies at 76–94; sequence RFCKNVFDRDYKATIGVDF. Thr89 and Asp112 together coordinate Mg(2+). Positions 113 to 132 match the Switch 2 motif; sequence TAGQEKFKCIASAYYRGAQV. GTP is bound by residues Gly115, Lys172, Asp174, Ser203, Ala204, and Lys205. Positions 243-267 are disordered; that stretch reads GDLIQMEGSPPETQESKRPSSLGCC. S-geranylgeranyl cysteine attachment occurs at residues Cys266 and Cys267.

It belongs to the small GTPase superfamily. Rab family. It depends on Mg(2+) as a cofactor. In terms of tissue distribution, ubiquitously present in all tissues examined.

The protein localises to the golgi apparatus membrane. The catalysed reaction is GTP + H2O = GDP + phosphate + H(+). Regulated by guanine nucleotide exchange factors (GEFs) which promote the exchange of bound GDP for free GTP. Regulated by GTPase activating proteins (GAPs) which increase the GTP hydrolysis activity. Inhibited by GDP dissociation inhibitors (GDIs). In terms of biological role, the small GTPases Rab are key regulators of intracellular membrane trafficking, from the formation of transport vesicles to their fusion with membranes. Rabs cycle between an inactive GDP-bound form and an active GTP-bound form that is able to recruit to membranes different sets of downstream effectors directly responsible for vesicle formation, movement, tethering and fusion. This chain is Ras-related protein Rab-36, found in Homo sapiens (Human).